A 493-amino-acid chain; its full sequence is Tripartite motif-containing protein 5 (493 aa).

N-acetylalanine is present on A2. An RING-type zinc finger spans residues 15-59 (CPICLELLTQPLSLDCGHSFCQACLTANHKKSMLDKGESSCPVCR). S86 carries the phosphoserine modification. Residues 90 to 132 (QKVDHCARHGEKLLLFCQEDGKVICWLCERSQEHRGHHTFLTE) form a B box-type zinc finger. C95, H98, C117, and H123 together coordinate Zn(2+). The stretch at 131–240 (TEEVAREYQV…LISDLERRLQ (110 aa)) forms a coiled coil. A required for interaction with GABARAP and for autophagy region spans residues 185–198 (FEQLRDILDWEESN). Residues 281–493 (LKGMLEVFRE…VPMTLCSPSS (213 aa)) enclose the B30.2/SPRY domain.

It belongs to the TRIM/RBCC family. Can form homodimers and homotrimers. In addition to lower-order dimerization, also exhibits a higher-order multimerization and both low- and high-order multimerizations are essential for its restriction activity. Interacts with BTBD1 and BTBD2. Interacts with PSMC4, PSMC5, PSMD7 and HSPA8/HSC70. Interacts (via B30.2/SPRY domain) with HSPA1A/B. Interacts with PSMC2, MAP3K7/TAK1, TAB2 and TAB3. Interacts with SQSTM1. Interacts with TRIM6 and TRIM34. Interacts with ULK1 (phosphorylated form), GABARAP, GABARAPL1, GABARAPL2, MAP1LC3A, MAP1LC3C and BECN1. In terms of processing, degraded in a proteasome-independent fashion in the absence of viral infection but in a proteasome-dependent fashion following exposure to restriction sensitive virus. Autoubiquitinated in a RING finger- and UBE2D2-dependent manner. Monoubiquitinated by TRIM21. Deubiquitinated by Yersinia YopJ. Ubiquitination may not lead to proteasomal degradation.

It localises to the cytoplasm. Its subcellular location is the nucleus. It catalyses the reaction S-ubiquitinyl-[E2 ubiquitin-conjugating enzyme]-L-cysteine + [acceptor protein]-L-lysine = [E2 ubiquitin-conjugating enzyme]-L-cysteine + N(6)-ubiquitinyl-[acceptor protein]-L-lysine.. It participates in protein modification; protein ubiquitination. Capsid-specific restriction factor that prevents infection from non-host-adapted retroviruses. Blocks viral replication early in the life cycle, after viral entry but before reverse transcription. In addition to acting as a capsid-specific restriction factor, also acts as a pattern recognition receptor that activates innate immune signaling in response to the retroviral capsid lattice. Binding to the viral capsid triggers its E3 ubiquitin ligase activity, and in concert with the heterodimeric ubiquitin conjugating enzyme complex UBE2V1-UBE2N (also known as UBC13-UEV1A complex) generates 'Lys-63'-linked polyubiquitin chains, which in turn are catalysts in the autophosphorylation of the MAP3K7/TAK1 complex (includes TAK1, TAB2, and TAB3). Activation of the MAP3K7/TAK1 complex by autophosphorylation results in the induction and expression of NF-kappa-B and MAPK-responsive inflammatory genes, thereby leading to an innate immune response in the infected cell. Plays a role in regulating autophagy through activation of autophagy regulator BECN1 by causing its dissociation from its inhibitors BCL2 and TAB2. The sequence is that of Tripartite motif-containing protein 5 (TRIM5) from Pan paniscus (Pygmy chimpanzee).